The following is a 273-amino-acid chain: Flagellin FljO (273 aa).

This sequence belongs to the bacterial flagellin family. As to quaternary structure, in C.crescentus, the flagellar filament is composed of multiple flagellins of 29 kDa; 27 kDa and 25 kDa.

Its subcellular location is the secreted. It localises to the bacterial flagellum. Flagellin is the subunit protein which polymerizes to form the filaments of bacterial flagella. The polypeptide is Flagellin FljO (fljO) (Caulobacter vibrioides (strain ATCC 19089 / CIP 103742 / CB 15) (Caulobacter crescentus)).